The sequence spans 87 residues: Small ribosomal subunit protein bS20 (87 aa).

The segment at 1–22 (MANSPQAKKRARQNEKRFAINK) is disordered.

This sequence belongs to the bacterial ribosomal protein bS20 family.

Functionally, binds directly to 16S ribosomal RNA. The protein is Small ribosomal subunit protein bS20 of Ruegeria sp. (strain TM1040) (Silicibacter sp.).